Consider the following 378-residue polypeptide: Tyrosinase-like protein phomQ1' (378 aa).

The chain crosses the membrane as a helical span at residues 42 to 62 (TIIVVSVITFAAIIGCWVFLS). 2 residues coordinate Cu cation: H130 and H139. The N-linked (GlcNAc...) asparagine glycan is linked to N209. 2 residues coordinate Cu cation: H279 and H305.

Belongs to the tyrosinase family. It depends on Cu(2+) as a cofactor.

It localises to the membrane. It participates in mycotoxin biosynthesis. In terms of biological role, tyrosinase-like protein; part of the gene cluster that mediates the biosynthesis of the phomopsins, a group of hexapeptide mycotoxins which infects lupins and causes lupinosis disease in livestock. The pathway starts with the processing of the precursor phomA' by several endopeptidases including kexin proteases as well as the cluster-specific S41 family peptidase phomP1 and the oligopeptidase phomG' to produce 10 identical copies of the hexapeptide Tyr-Val-Ile-Pro-Ile-Asp. After being excised from the precursor peptide, the core peptides are cyclized and modified post-translationally by enzymes encoded within the gene cluster. The timing and order of proteolysis of the phomA' precursor and PTMs are still unknown. Two tyrosinase-like enzymes, phomQ1' and phomQ2, catalyze the chlorination and hydroxylation of Tyr, respectively. PhomYb, is proposed to be involved in the construction of the macrocyclic structure. The other 4 ustYa family proteins may be involved in PTMs that generate the unique structure of phomopsin A. PhomYa' is required for the hydroxylation of C-beta of Tyr. PhomYc', phomYd', and phomYe are responsible for the biosynthesis of 2,3-dehydroisoleucine (dIle), 2,3-dehydroaspartic acid (dAsp), and 3,4-dehydroproline (dPro), respectively. While dIle formation by phomYc' is indispensable for the installation of dAsp by phomYd', the order of the other PTMs have not been elucidated yet. Most of the biosynthetic enzymes likely have broad substrate specificity, and thus, there might be a metabolic grid from a precursor to phomopsin A. The enzyme(s) responsible for the biosynthesis of 3,4-dehydrovaline (dVal) have also not been identified yet. Finally, phomM' acts as an S-adenosylmethionine-dependent alpha-N-methyltransferase that catalyzes two successive N-methylation reactions, converting N-desmethyl-phomopsin A to phomopsin A and phomopsin A further to an N,N-dimethylated congener called phomopsin E. The chain is Tyrosinase-like protein phomQ1' from Diaporthe leptostromiformis (Lupinosis disease fungus).